Reading from the N-terminus, the 796-residue chain is Kinesin-like protein KIF3C (796 aa).

The 358-residue stretch at Ala10 to Ile367 folds into the Kinesin motor domain. Gly97–Thr104 contacts ATP. Disordered stretches follow at residues Arg252–Ala292, Glu397–Gly422, and Lys758–Asp796. Positions Ala256–Thr269 are enriched in low complexity. A coiled-coil region spans residues Lys378 to Lys632. A compositionally biased stretch (basic residues) spans Met401–Ala416. Residues Tyr633–Val793 form a globular region.

The protein belongs to the TRAFAC class myosin-kinesin ATPase superfamily. Kinesin family. Kinesin II subfamily. Heterodimer of KIF3A and KIF3C.

The protein resides in the cytoplasm. The protein localises to the cytoskeleton. In terms of biological role, microtubule-based anterograde translocator for membranous organelles. This Mus musculus (Mouse) protein is Kinesin-like protein KIF3C (Kif3c).